The primary structure comprises 89 residues: Large ribosomal subunit protein eL37A (89 aa).

The Zn(2+) site is built by Cys-19, Cys-22, Cys-34, and Cys-37. Residues 19–37 (CRRCGKRSFHIQKSTCACC) form a C4-type zinc finger.

It belongs to the eukaryotic ribosomal protein eL37 family. As to quaternary structure, component of the large ribosomal subunit (LSU). Mature yeast ribosomes consist of a small (40S) and a large (60S) subunit. The 40S small subunit contains 1 molecule of ribosomal RNA (18S rRNA) and at least 33 different proteins. The large 60S subunit contains 3 rRNA molecules (25S, 5.8S and 5S rRNA) and at least 46 different proteins. Requires Zn(2+) as cofactor.

The protein localises to the cytoplasm. In terms of biological role, component of the ribosome, a large ribonucleoprotein complex responsible for the synthesis of proteins in the cell. The small ribosomal subunit (SSU) binds messenger RNAs (mRNAs) and translates the encoded message by selecting cognate aminoacyl-transfer RNA (tRNA) molecules. The large subunit (LSU) contains the ribosomal catalytic site termed the peptidyl transferase center (PTC), which catalyzes the formation of peptide bonds, thereby polymerizing the amino acids delivered by tRNAs into a polypeptide chain. The nascent polypeptides leave the ribosome through a tunnel in the LSU and interact with protein factors that function in enzymatic processing, targeting, and the membrane insertion of nascent chains at the exit of the ribosomal tunnel. In Schizosaccharomyces pombe (strain 972 / ATCC 24843) (Fission yeast), this protein is Large ribosomal subunit protein eL37A (rpl3703).